The chain runs to 121 residues: uncharacterized protein (121 aa).

2 disordered regions span residues 24-43 (SGRT…GRGG) and 100-121 (DHEN…TDQR).

This is an uncharacterized protein from Homo sapiens (Human).